Consider the following 384-residue polypeptide: Flap endonuclease 1 (384 aa).

The interval methionine 1–arginine 105 is N-domain. Residue aspartate 34 coordinates Mg(2+). Arginine 47 and arginine 71 together coordinate DNA. Residues aspartate 87, glutamate 159, glutamate 161, aspartate 180, and aspartate 182 each contribute to the Mg(2+) site. The I-domain stretch occupies residues aspartate 123–histidine 254. Glutamate 159 serves as a coordination point for DNA. Residues glycine 232 and aspartate 234 each coordinate DNA. Residue aspartate 234 coordinates Mg(2+). The interval isoleucine 341–phenylalanine 349 is interaction with PCNA. Residues lysine 354–arginine 384 are disordered. Residues glycine 362–glycine 375 are compositionally biased toward basic and acidic residues.

This sequence belongs to the XPG/RAD2 endonuclease family. FEN1 subfamily. Interacts with PCNA. Three molecules of FEN1 bind to one PCNA trimer with each molecule binding to one PCNA monomer. PCNA stimulates the nuclease activity without altering cleavage specificity. It depends on Mg(2+) as a cofactor. In terms of processing, phosphorylated. Phosphorylation upon DNA damage induces relocalization to the nuclear plasma.

It localises to the nucleus. It is found in the nucleolus. Its subcellular location is the nucleoplasm. The protein localises to the mitochondrion. In terms of biological role, structure-specific nuclease with 5'-flap endonuclease and 5'-3' exonuclease activities involved in DNA replication and repair. During DNA replication, cleaves the 5'-overhanging flap structure that is generated by displacement synthesis when DNA polymerase encounters the 5'-end of a downstream Okazaki fragment. It enters the flap from the 5'-end and then tracks to cleave the flap base, leaving a nick for ligation. Also involved in the long patch base excision repair (LP-BER) pathway, by cleaving within the apurinic/apyrimidinic (AP) site-terminated flap. Acts as a genome stabilization factor that prevents flaps from equilibrating into structures that lead to duplications and deletions. Also possesses 5'-3' exonuclease activity on nicked or gapped double-stranded DNA, and exhibits RNase H activity. Also involved in replication and repair of rDNA and in repairing mitochondrial DNA. This chain is Flap endonuclease 1, found in Lodderomyces elongisporus (strain ATCC 11503 / CBS 2605 / JCM 1781 / NBRC 1676 / NRRL YB-4239) (Yeast).